Reading from the N-terminus, the 261-residue chain is Transcription factor BEE 3 (261 aa).

The span at Asn72 to Gln82 shows a compositional bias: low complexity. Disordered regions lie at residues Asn72–His158 and Val242–Leu261. Polar residues predominate over residues Val95 to Lys123. Residues Asn135–His146 show a composition bias toward basic and acidic residues. The 51-residue stretch at Gln153–Leu203 folds into the bHLH domain.

Homodimer. In terms of tissue distribution, expressed in stems.

Its subcellular location is the nucleus. Its function is as follows. Positive regulator of brassinosteroid signaling. The polypeptide is Transcription factor BEE 3 (BEE3) (Arabidopsis thaliana (Mouse-ear cress)).